The primary structure comprises 138 residues: Small ribosomal subunit protein uS11B (138 aa).

Residues 118–138 (DVTPVPSDSTRKKGGRRGRRL) form a disordered region. The span at 129-138 (KKGGRRGRRL) shows a compositional bias: basic residues.

It belongs to the universal ribosomal protein uS11 family. In terms of assembly, component of the small ribosomal subunit (SSU). Mature yeast ribosomes consist of a small (40S) and a large (60S) subunit. The 40S small subunit contains 1 molecule of ribosomal RNA (18S rRNA) and 33 different proteins (encoded by 57 genes). The large 60S subunit contains 3 rRNA molecules (25S, 5.8S and 5S rRNA) and 46 different proteins (encoded by 81 genes). uS11 interacts with eS1 forming part of the mRNA exit tunnel. uS11 interacts with snoRNA U3. uS11 interacts with MPP10. Component of the ribosomal small subunit (SSU) processome composed of at least 40 protein subunits and snoRNA U3.

It localises to the cytoplasm. The protein resides in the nucleus. It is found in the nucleolus. Its function is as follows. Component of the ribosome, a large ribonucleoprotein complex responsible for the synthesis of proteins in the cell. The small ribosomal subunit (SSU) binds messenger RNAs (mRNAs) and translates the encoded message by selecting cognate aminoacyl-transfer RNA (tRNA) molecules. The large subunit (LSU) contains the ribosomal catalytic site termed the peptidyl transferase center (PTC), which catalyzes the formation of peptide bonds, thereby polymerizing the amino acids delivered by tRNAs into a polypeptide chain. The nascent polypeptides leave the ribosome through a tunnel in the LSU and interact with protein factors that function in enzymatic processing, targeting, and the membrane insertion of nascent chains at the exit of the ribosomal tunnel. uS11 is involved in nucleolar processing of pre-18S ribosomal RNA and ribosome assembly. The protein is Small ribosomal subunit protein uS11B of Saccharomyces cerevisiae (strain ATCC 204508 / S288c) (Baker's yeast).